A 141-amino-acid chain; its full sequence is Large ribosomal subunit protein uL16 (141 aa).

The disordered stretch occupies residues 1-20; it reads MLMPKRTKYRKQMKGRNRGK.

The protein belongs to the universal ribosomal protein uL16 family. Part of the 50S ribosomal subunit.

Binds 23S rRNA and is also seen to make contacts with the A and possibly P site tRNAs. This Helicobacter hepaticus (strain ATCC 51449 / 3B1) protein is Large ribosomal subunit protein uL16.